The primary structure comprises 135 residues: Methylglyoxal synthase (135 aa).

Residues methionine 1–alanine 135 form the MGS-like domain. Residues histidine 12, lysine 16, threonine 38–threonine 41, and serine 58–glycine 59 each bind substrate. Aspartate 64 (proton donor/acceptor) is an active-site residue. Histidine 91 lines the substrate pocket.

Belongs to the methylglyoxal synthase family.

It carries out the reaction dihydroxyacetone phosphate = methylglyoxal + phosphate. Functionally, catalyzes the formation of methylglyoxal from dihydroxyacetone phosphate. This chain is Methylglyoxal synthase, found in Ralstonia nicotianae (strain ATCC BAA-1114 / GMI1000) (Ralstonia solanacearum).